Consider the following 64-residue polypeptide: Small ribosomal subunit protein bS21 (64 aa).

It belongs to the bacterial ribosomal protein bS21 family.

This chain is Small ribosomal subunit protein bS21, found in Karelsulcia muelleri (strain GWSS) (Sulcia muelleri).